We begin with the raw amino-acid sequence, 342 residues long: S-adenosylmethionine:tRNA ribosyltransferase-isomerase (342 aa).

This sequence belongs to the QueA family. Monomer.

The protein resides in the cytoplasm. The enzyme catalyses 7-aminomethyl-7-carbaguanosine(34) in tRNA + S-adenosyl-L-methionine = epoxyqueuosine(34) in tRNA + adenine + L-methionine + 2 H(+). Its pathway is tRNA modification; tRNA-queuosine biosynthesis. Transfers and isomerizes the ribose moiety from AdoMet to the 7-aminomethyl group of 7-deazaguanine (preQ1-tRNA) to give epoxyqueuosine (oQ-tRNA). The sequence is that of S-adenosylmethionine:tRNA ribosyltransferase-isomerase from Streptococcus pneumoniae serotype 19F (strain G54).